The following is a 232-amino-acid chain: Zinc import ATP-binding protein ZnuC (232 aa).

The ABC transporter domain occupies 5–220; the sequence is VNLKNIFVFY…PSFIEMFGCY (216 aa). An ATP-binding site is contributed by 37–44; the sequence is GPNGSGKS.

Belongs to the ABC transporter superfamily. Zinc importer (TC 3.A.1.15.5) family. As to quaternary structure, the complex is composed of two ATP-binding proteins (ZnuC), two transmembrane proteins (ZnuB) and a solute-binding protein (ZnuA).

Its subcellular location is the cell membrane. The enzyme catalyses Zn(2+)(out) + ATP(in) + H2O(in) = Zn(2+)(in) + ADP(in) + phosphate(in) + H(+)(in). In terms of biological role, part of the ABC transporter complex ZnuABC involved in zinc import. Responsible for energy coupling to the transport system. This is Zinc import ATP-binding protein ZnuC from Wigglesworthia glossinidia brevipalpis.